The following is a 206-amino-acid chain: Putative 3-methyladenine DNA glycosylase (206 aa).

This sequence belongs to the DNA glycosylase MPG family.

This chain is Putative 3-methyladenine DNA glycosylase, found in Staphylococcus carnosus (strain TM300).